Consider the following 134-residue polypeptide: Homeobox protein ceh-5 (134 aa).

Residues 35-94 (PKRPRTVFTDEQLEKLEESFNTSGYLSGSTRAKLAESLGLSDNQVKVWFQNRRTKQKKID) constitute a DNA-binding region (homeobox).

It localises to the nucleus. In Caenorhabditis elegans, this protein is Homeobox protein ceh-5 (ceh-5).